Reading from the N-terminus, the 509-residue chain is Protein disulfide-isomerase (509 aa).

The N-terminal stretch at 1 to 19 (MLSRSLLCLALAWVARVGA) is a signal peptide. Positions 20 to 136 (DAPEEEDNVL…IVNWLKKRTG (117 aa)) constitute a Thioredoxin 1 domain. Residues cysteine 55 and cysteine 58 each act as nucleophile in the active site. Cysteine 55 and cysteine 58 are oxidised to a cystine. An N6-acetyllysine modification is found at lysine 202. Residues lysine 224 and lysine 273 each carry the N6-succinyllysine modification. Phosphoserine occurs at positions 333 and 359. Residues 335–477 (ELTAEKITEF…FKKFLESGGQ (143 aa)) enclose the Thioredoxin 2 domain. Catalysis depends on nucleophile residues cysteine 399 and cysteine 402. Cysteine 399 and cysteine 402 form a disulfide bridge. A Phosphoserine modification is found at serine 429. A disordered region spans residues 473-509 (ESGGQDGAGDDDDVDLEEALEPDMEEDDDQKAVKDEL). Residues 480–501 (AGDDDDVDLEEALEPDMEEDDD) show a composition bias toward acidic residues. The short motif at 506-509 (KDEL) is the Prevents secretion from ER element.

Belongs to the protein disulfide isomerase family. In terms of assembly, heterodimer; heterodimerizes with the protein microsomal triglyceride transfer MTTP. Homodimer. Homodimer. Monomers and homotetramers may also occur. Interacts with P4HA2, forming a heterotetramer consisting of 2 alpha subunits (P4HA2) and 2 beta (P4HB), where P4HB plays the role of a structural subunit; this tetramer catalyzes the formation of 4-hydroxyproline in collagen. Also constitutes the structural subunit of the microsomal triacylglycerol transfer protein MTTP in mammalian cells. Stabilizes both enzymes and retain them in the ER without contributing to the catalytic activity. Binds UBQLN1. Interacts with ERO1B. Interacts with ILDR2. Interacts with ERN1/IRE1A (via N-terminus); the interaction is enhanced by phosphorylation of P4HB by FAM20C in response to endoplasmic reticulum stress and results in attenuation of ERN1 activity. Phosphorylation of Ser-359 by FAM20C is induced by endoplasmic reticulum stress and results in a functional switch from oxidoreductase to molecular chaperone. It also promotes interaction with ERN1.

The protein resides in the endoplasmic reticulum. It is found in the endoplasmic reticulum lumen. Its subcellular location is the melanosome. The protein localises to the cell membrane. It carries out the reaction Catalyzes the rearrangement of -S-S- bonds in proteins.. In terms of biological role, this multifunctional protein catalyzes the formation, breakage and rearrangement of disulfide bonds. At the cell surface, seems to act as a reductase that cleaves disulfide bonds of proteins attached to the cell. May therefore cause structural modifications of exofacial proteins. Inside the cell, seems to form/rearrange disulfide bonds of nascent proteins. At high concentrations and following phosphorylation by FAM20C, functions as a chaperone that inhibits aggregation of misfolded proteins. At low concentrations, facilitates aggregation (anti-chaperone activity). May be involved with other chaperones in the structural modification of the TG precursor in hormone biogenesis. Also acts as a structural subunit of various enzymes such as prolyl 4-hydroxylase and microsomal triacylglycerol transfer protein MTTP. Receptor for LGALS9; the interaction retains P4HB at the cell surface of Th2 T helper cells, increasing disulfide reductase activity at the plasma membrane, altering the plasma membrane redox state and enhancing cell migration. The sequence is that of Protein disulfide-isomerase (P4HB) from Cricetulus griseus (Chinese hamster).